Reading from the N-terminus, the 387-residue chain is 3-ketoacyl-CoA thiolase (387 aa).

Cysteine 91 (acyl-thioester intermediate) is an active-site residue. Active-site proton acceptor residues include histidine 343 and cysteine 373.

Belongs to the thiolase-like superfamily. Thiolase family. In terms of assembly, heterotetramer of two alpha chains (FadB) and two beta chains (FadA).

Its subcellular location is the cytoplasm. The catalysed reaction is an acyl-CoA + acetyl-CoA = a 3-oxoacyl-CoA + CoA. The protein operates within lipid metabolism; fatty acid beta-oxidation. Catalyzes the final step of fatty acid oxidation in which acetyl-CoA is released and the CoA ester of a fatty acid two carbons shorter is formed. This is 3-ketoacyl-CoA thiolase from Escherichia coli O139:H28 (strain E24377A / ETEC).